Consider the following 173-residue polypeptide: uncharacterized protein (173 aa).

This is an uncharacterized protein from Saccharomyces cerevisiae (strain ATCC 204508 / S288c) (Baker's yeast).